The primary structure comprises 561 residues: Zinc finger protein 394 (561 aa).

A disordered region spans residues Met1–Glu61. Phosphoserine is present on Ser12. Lys40 participates in a covalent cross-link: Glycyl lysine isopeptide (Lys-Gly) (interchain with G-Cter in SUMO2). An SCAN box domain is found at Arg64 to Leu146. The KRAB domain occupies Val155 to Pro230. Residues Glu182–Glu201 are disordered. Residues Lys203 and Lys228 each participate in a glycyl lysine isopeptide (Lys-Gly) (interchain with G-Cter in SUMO2) cross-link. Residues Leu231 to Glu285 form a disordered region. Residues Ser237–Ser247 show a composition bias toward basic and acidic residues. Lys254 participates in a covalent cross-link: Glycyl lysine isopeptide (Lys-Gly) (interchain with G-Cter in SUMO2). Polar residues predominate over residues Asn265–Gly274. A Glycyl lysine isopeptide (Lys-Gly) (interchain with G-Cter in SUMO2) cross-link involves residue Lys282. C2H2-type zinc fingers lie at residues Tyr358–His380, Tyr386–His408, Tyr414–His436, Phe442–His463, Tyr469–His491, Tyr497–His519, and Tyr525–His547. Residue Lys443 forms a Glycyl lysine isopeptide (Lys-Gly) (interchain with G-Cter in SUMO2) linkage.

Belongs to the krueppel C2H2-type zinc-finger protein family.

The protein resides in the nucleus. May be involved in transcriptional regulation. The protein is Zinc finger protein 394 (ZNF394) of Homo sapiens (Human).